The chain runs to 398 residues: Acetate kinase (398 aa).

A Mg(2+)-binding site is contributed by Asn-8. Lys-15 is an ATP binding site. Arg-90 is a substrate binding site. Residue Asp-147 is the Proton donor/acceptor of the active site. ATP contacts are provided by residues 207-211 (HIGAG), 282-284 (DMR), and 330-334 (GVGEN). Glu-383 lines the Mg(2+) pocket.

The protein belongs to the acetokinase family. As to quaternary structure, homodimer. Mg(2+) serves as cofactor. The cofactor is Mn(2+).

The protein localises to the cytoplasm. It catalyses the reaction acetate + ATP = acetyl phosphate + ADP. It participates in metabolic intermediate biosynthesis; acetyl-CoA biosynthesis; acetyl-CoA from acetate: step 1/2. Functionally, catalyzes the formation of acetyl phosphate from acetate and ATP. Can also catalyze the reverse reaction. The chain is Acetate kinase from Limosilactobacillus fermentum (strain NBRC 3956 / LMG 18251) (Lactobacillus fermentum).